The sequence spans 136 residues: Large ribosomal subunit protein uL16 (136 aa).

This sequence belongs to the universal ribosomal protein uL16 family. As to quaternary structure, part of the 50S ribosomal subunit.

In terms of biological role, binds 23S rRNA and is also seen to make contacts with the A and possibly P site tRNAs. The protein is Large ribosomal subunit protein uL16 of Photobacterium profundum (strain SS9).